The sequence spans 134 residues: Fluoride-specific ion channel FluC (134 aa).

The next 4 membrane-spanning stretches (helical) occupy residues 7 to 27 (LAVAIGGSLGAMSRYLVTIMA), 38 to 58 (GTLLVNTLGSFLAGFFLIVLV), 69 to 89 (LFLFTGFLGAFTTFSSFAAES), and 110 to 130 (VGSLSMVFIGTLVAKYVLLGH). Na(+) contacts are provided by G77 and T80.

It belongs to the fluoride channel Fluc/FEX (TC 1.A.43) family.

The protein resides in the cell inner membrane. The enzyme catalyses fluoride(in) = fluoride(out). Its activity is regulated as follows. Na(+) is not transported, but it plays an essential structural role and its presence is essential for fluoride channel function. In terms of biological role, fluoride-specific ion channel. Important for reducing fluoride concentration in the cell, thus reducing its toxicity. In Legionella pneumophila (strain Paris), this protein is Fluoride-specific ion channel FluC.